The following is a 178-amino-acid chain: Large ribosomal subunit protein uL6 (178 aa).

The protein belongs to the universal ribosomal protein uL6 family. Part of the 50S ribosomal subunit.

Its function is as follows. This protein binds to the 23S rRNA, and is important in its secondary structure. It is located near the subunit interface in the base of the L7/L12 stalk, and near the tRNA binding site of the peptidyltransferase center. The chain is Large ribosomal subunit protein uL6 from Buchnera aphidicola subsp. Acyrthosiphon pisum (strain APS) (Acyrthosiphon pisum symbiotic bacterium).